The following is a 362-amino-acid chain: Acetylglutamate kinase (362 aa).

Positions 1-11 are enriched in pro residues; it reads MNAPTRTPPPS. A disordered region spans residues 1-42; the sequence is MNAPTRTPPPSNGGHGSTGSTGSTGDAAPGGGTGRGPAATAR. Residues 106 to 107, R128, and N227 contribute to the substrate site; that span reads GG. A disordered region spans residues 329 to 362; it reads MAESGTSPEPGTPPAPAARPAGIVPAGEPTGGTP. Residues 346 to 355 are compositionally biased toward low complexity; the sequence is ARPAGIVPAG.

The protein belongs to the acetylglutamate kinase family. ArgB subfamily.

It is found in the cytoplasm. The enzyme catalyses N-acetyl-L-glutamate + ATP = N-acetyl-L-glutamyl 5-phosphate + ADP. The protein operates within amino-acid biosynthesis; L-arginine biosynthesis; N(2)-acetyl-L-ornithine from L-glutamate: step 2/4. Catalyzes the ATP-dependent phosphorylation of N-acetyl-L-glutamate. This is Acetylglutamate kinase from Frankia casuarinae (strain DSM 45818 / CECT 9043 / HFP020203 / CcI3).